A 209-amino-acid polypeptide reads, in one-letter code: Thymidylate kinase (209 aa).

10-17 (GIDGCGKS) serves as a coordination point for ATP.

Belongs to the thymidylate kinase family.

The catalysed reaction is dTMP + ATP = dTDP + ADP. Functionally, phosphorylation of dTMP to form dTDP in both de novo and salvage pathways of dTTP synthesis. The protein is Thymidylate kinase of Parasynechococcus marenigrum (strain WH8102).